Consider the following 364-residue polypeptide: Glycosyltransferase 8 domain-containing protein 1 (364 aa).

Residues methionine 1–histidine 5 lie on the Cytoplasmic side of the membrane. The helical; Signal-anchor for type II membrane protein transmembrane segment at isoleucine 6–glycine 26 threads the bilayer. The Lumenal portion of the chain corresponds to leucine 27–glutamate 364. N-linked (GlcNAc...) asparagine glycosylation is found at asparagine 102, asparagine 247, and asparagine 255.

The protein belongs to the glycosyltransferase 8 family.

It localises to the membrane. This Xenopus laevis (African clawed frog) protein is Glycosyltransferase 8 domain-containing protein 1 (glt8d1).